The sequence spans 223 residues: Urease accessory protein UreF (223 aa).

This sequence belongs to the UreF family. In terms of assembly, ureD, UreF and UreG form a complex that acts as a GTP-hydrolysis-dependent molecular chaperone, activating the urease apoprotein by helping to assemble the nickel containing metallocenter of UreC. The UreE protein probably delivers the nickel.

Its subcellular location is the cytoplasm. Required for maturation of urease via the functional incorporation of the urease nickel metallocenter. In Pseudomonas aeruginosa (strain LESB58), this protein is Urease accessory protein UreF.